The sequence spans 273 residues: Vacuolar membrane protein YPL162C (273 aa).

Residues methionine 1–leucine 13 are Vacuolar-facing. The helical transmembrane segment at glycine 14–valine 34 threads the bilayer. Residues lysine 35–aspartate 51 lie on the Cytoplasmic side of the membrane. A helical transmembrane segment spans residues isoleucine 52–leucine 72. Residues lysine 73 to phenylalanine 97 are Vacuolar-facing. A helical membrane pass occupies residues leucine 98 to isoleucine 118. Topologically, residues glutamate 119–glutamine 156 are cytoplasmic. Residues leucine 157–tyrosine 177 form a helical membrane-spanning segment. The Vacuolar portion of the chain corresponds to leucine 178–asparagine 198. Residues phenylalanine 199–cysteine 219 form a helical membrane-spanning segment. Over valine 220–isoleucine 273 the chain is Cytoplasmic.

It is found in the vacuole membrane. The sequence is that of Vacuolar membrane protein YPL162C from Saccharomyces cerevisiae (strain ATCC 204508 / S288c) (Baker's yeast).